The sequence spans 246 residues: Ubiquinone biosynthesis O-methyltransferase (246 aa).

Positions 36, 60, 81, and 123 each coordinate S-adenosyl-L-methionine.

Belongs to the methyltransferase superfamily. UbiG/COQ3 family.

It catalyses the reaction a 3-demethylubiquinol + S-adenosyl-L-methionine = a ubiquinol + S-adenosyl-L-homocysteine + H(+). It carries out the reaction a 3-(all-trans-polyprenyl)benzene-1,2-diol + S-adenosyl-L-methionine = a 2-methoxy-6-(all-trans-polyprenyl)phenol + S-adenosyl-L-homocysteine + H(+). It functions in the pathway cofactor biosynthesis; ubiquinone biosynthesis. In terms of biological role, O-methyltransferase that catalyzes the 2 O-methylation steps in the ubiquinone biosynthetic pathway. The sequence is that of Ubiquinone biosynthesis O-methyltransferase from Rickettsia typhi (strain ATCC VR-144 / Wilmington).